Consider the following 76-residue polypeptide: Sec-independent protein translocase protein TatA (76 aa).

Residues 1-21 (MGSFSIWHWLIVLVIVMLIFG) form a helical membrane-spanning segment. Residues 47-76 (NADKPAEEAQPTQQVGGHTIDVEVKEKTKS) form a disordered region. The span at 66–76 (IDVEVKEKTKS) shows a compositional bias: basic and acidic residues.

This sequence belongs to the TatA/E family. As to quaternary structure, the Tat system comprises two distinct complexes: a TatABC complex, containing multiple copies of TatA, TatB and TatC subunits, and a separate TatA complex, containing only TatA subunits. Substrates initially bind to the TatABC complex, which probably triggers association of the separate TatA complex to form the active translocon.

Its subcellular location is the cell inner membrane. Part of the twin-arginine translocation (Tat) system that transports large folded proteins containing a characteristic twin-arginine motif in their signal peptide across membranes. TatA could form the protein-conducting channel of the Tat system. The protein is Sec-independent protein translocase protein TatA of Dechloromonas aromatica (strain RCB).